The primary structure comprises 655 residues: Potassium voltage-gated channel subfamily A member 4 (655 aa).

Residues Met1–Ser306 lie on the Cytoplasmic side of the membrane. The segment at Gln24 to Ser153 is disordered. A compositionally biased stretch (low complexity) spans Ser36–Ala50. Basic and acidic residues predominate over residues Gly81–Thr90. Basic residues predominate over residues Glu91–Gln100. Ser123 is subject to Phosphoserine. Residues Ser123–Glu138 are compositionally biased toward acidic residues. Over residues Gly139–Asp150 the composition is skewed to basic and acidic residues. Residues Pro307–Leu328 form a helical membrane-spanning segment. The Extracellular portion of the chain corresponds to Glu329–Pro372. Asn354 is a glycosylation site (N-linked (GlcNAc...) asparagine). Residues Phe373 to Ala394 traverse the membrane as a helical segment. The Cytoplasmic portion of the chain corresponds to Cys395 to Ile405. A helical transmembrane segment spans residues Met406 to Ala426. The Extracellular portion of the chain corresponds to Gln427–Ser441. A helical; Voltage-sensor transmembrane segment spans residues Phe442–His462. Residues Ser463–Met477 lie on the Cytoplasmic side of the membrane. Residues Lys464–Met477 are S4-S5 linker. The helical transmembrane segment at Arg478 to Tyr499 threads the bilayer. The Extracellular portion of the chain corresponds to Phe500–Ile513. The helical intramembrane region spans Pro514–Thr525. The Selectivity filter signature appears at Thr526–Asp531. An intramembrane segment occupies Thr526 to Lys533. At Pro534–Lys540 the chain is on the extracellular side. Residues Ile541 to Tyr569 traverse the membrane as a helical segment. The Cytoplasmic portion of the chain corresponds to His570–Val655. Ser601 carries the post-translational modification Phosphoserine; by PKA. The span at Cys631–Lys642 shows a compositional bias: basic and acidic residues. The segment at Cys631 to Val655 is disordered. A PDZ-binding motif is present at residues Thr653–Val655.

This sequence belongs to the potassium channel family. A (Shaker) (TC 1.A.1.2) subfamily. Kv1.4/KCNA4 sub-subfamily. In terms of assembly, homotetramer and heterotetramer of potassium channel proteins. Interacts with KCNAB1 and KCNAB2. Interacts with DLG1, DLG2 and DLG4 via their PDZ domains. Interacts with SIGMAR1. Part of a complex containing KCNA1, KCNAB1 and LGI1. Detected in a complex with KCNA1. Interacts with KCNA2. Interacts (via cytoplasmic N-terminal domain) with KCNRG. N-glycosylated. In terms of tissue distribution, detected in brain (at protein level). Heart and brain.

It localises to the cell membrane. It is found in the cell projection. Its subcellular location is the axon. The enzyme catalyses K(+)(in) = K(+)(out). Functionally, voltage-gated potassium channel that mediates transmembrane potassium transport in excitable membranes. Forms tetrameric potassium-selective channels through which potassium ions pass in accordance with their electrochemical gradient. The channel alternates between opened and closed conformations in response to the voltage difference across the membrane. Can form functional homotetrameric channels and heterotetrameric channels that contain variable proportions of KCNA1, KCNA2, KCNA4, KCNA5, and possibly other family members as well; channel properties depend on the type of alpha subunits that are part of the channel. Channel properties are modulated by cytoplasmic beta subunits that regulate the subcellular location of the alpha subunits and promote rapid inactivation. In vivo, membranes probably contain a mixture of heteromeric potassium channel complexes, making it difficult to assign currents observed in intact tissues to any particular potassium channel family member. Homotetrameric KCNA4 forms a potassium channel that opens in response to membrane depolarization, followed by rapid spontaneous channel closure. Likewise, a heterotetrameric channel formed by KCNA1 and KCNA4 shows rapid inactivation. The sequence is that of Potassium voltage-gated channel subfamily A member 4 (Kcna4) from Rattus norvegicus (Rat).